Here is a 113-residue protein sequence, read N- to C-terminus: Probable 4-amino-4-deoxy-L-arabinose-phosphoundecaprenol flippase subunit ArnE (113 aa).

The next 3 membrane-spanning stretches (helical) occupy residues 37 to 57, 62 to 82, and 91 to 111; these read SALK…LFWL, ILPL…VTLA, and AGIK…LMSL. Residues 45 to 111 enclose the EamA domain; that stretch reads AVILLAVGML…IMLGILLMSL (67 aa).

It belongs to the ArnE family. Heterodimer of ArnE and ArnF.

The protein localises to the cell inner membrane. The protein operates within bacterial outer membrane biogenesis; lipopolysaccharide biosynthesis. Functionally, translocates 4-amino-4-deoxy-L-arabinose-phosphoundecaprenol (alpha-L-Ara4N-phosphoundecaprenol) from the cytoplasmic to the periplasmic side of the inner membrane. In Photorhabdus laumondii subsp. laumondii (strain DSM 15139 / CIP 105565 / TT01) (Photorhabdus luminescens subsp. laumondii), this protein is Probable 4-amino-4-deoxy-L-arabinose-phosphoundecaprenol flippase subunit ArnE.